We begin with the raw amino-acid sequence, 112 residues long: UstYa family oxidase VicYb (112 aa).

Short sequence motifs (HXXHC) lie at residues 9–13 and 36–40; these read HYLHC and HLDHC.

Belongs to the ustYa family.

It functions in the pathway mycotoxin biosynthesis. Functionally, ustYa family oxidase, part of the gene cluster that mediates the biosynthesis of the secondary metabolite victorin, the molecular basis for Victoria blight of oats. Within the pathway, vicYb catalyzes the oxidative cyclization of the core peptide. The pathway starts with the processing of the precursor vicA1 by several endopeptidases including kexin proteases as well as the cluster-specific S28 family peptidases vicPa and vicPb to produce 7 identical copies of the hexapeptide Gly-Leu-Lys-Leu-Ala-Phe. After being excised from the precursor peptide, the core peptides are cyclized and modified post-translationally by enzymes encoded within the gene cluster. The ustYa family oxidase vicYb is required for the formation of the macrocycle in victorin and the copper amine oxidases (CAOs) vicK1 and vicK2 are responsible for converting victorin to the active form by oxidizing the N-terminal glycyl residue in the peptides to glyoxylate. Relaxed substrate specificity of enzymes in the victorin biosynthetic pathway results in a metabolic grid that produces a set of analogs including victorinines B, C, E or HV-toxin M. The sequence is that of UstYa family oxidase VicYb from Bipolaris victoriae (strain FI3) (Victoria blight of oats agent).